The sequence spans 201 residues: Orotate phosphoribosyltransferase (201 aa).

113 to 121 (EDIITTGKS) lines the 5-phospho-alpha-D-ribose 1-diphosphate pocket. Orotate is bound by residues T117 and R145.

It belongs to the purine/pyrimidine phosphoribosyltransferase family. PyrE subfamily. Homodimer. It depends on Mg(2+) as a cofactor.

It catalyses the reaction orotidine 5'-phosphate + diphosphate = orotate + 5-phospho-alpha-D-ribose 1-diphosphate. It participates in pyrimidine metabolism; UMP biosynthesis via de novo pathway; UMP from orotate: step 1/2. Catalyzes the transfer of a ribosyl phosphate group from 5-phosphoribose 1-diphosphate to orotate, leading to the formation of orotidine monophosphate (OMP). The sequence is that of Orotate phosphoribosyltransferase from Helicobacter pylori (strain G27).